A 350-amino-acid chain; its full sequence is Divinyl chlorophyll a/b light-harvesting protein PcbB (350 aa).

Helical transmembrane passes span 27-47, 89-109, 141-161, 202-222, 244-264, and 305-325; these read FLAAHIAHTGLMAFWAGSFTL, IVVTAVLHLVLSMVYAAGGLM, FILGHHLFLLGLGNVQFVEWA, VMGGHAFLALFMMSGGLWHIV, LSWALAGVGWMALVAAFWCAS, and LTNIHYYLGFFYIQGHLWHAL.

Belongs to the PsbB/PsbC family. IsiA/Pcb subfamily. As to quaternary structure, the antenna complex consists of divinyl chlorophylls (a and b) and divinyl chlorophyll a/b binding proteins. Under iron-starvation forms a complex with PSI, consisting of a PSI trimer surrounded by a ring composed of 18 PcbB subunits. Divinyl chlorophyll a serves as cofactor. Divinyl chlorophyll b is required as a cofactor.

The protein localises to the cellular thylakoid membrane. The antenna complex functions as a light receptor, it captures and delivers excitation energy to photosystems I. The Prochlorales pcb genes are not related to higher plant LHCs. The protein is Divinyl chlorophyll a/b light-harvesting protein PcbB (pcbB) of Prochlorococcus marinus (strain MIT 9313).